We begin with the raw amino-acid sequence, 414 residues long: Esterase FrsA (414 aa).

The protein belongs to the FrsA family.

It carries out the reaction a carboxylic ester + H2O = an alcohol + a carboxylate + H(+). Its function is as follows. Catalyzes the hydrolysis of esters. This is Esterase FrsA from Escherichia coli O127:H6 (strain E2348/69 / EPEC).